A 178-amino-acid polypeptide reads, in one-letter code: ATP synthase subunit delta (178 aa).

This sequence belongs to the ATPase delta chain family. F-type ATPases have 2 components, F(1) - the catalytic core - and F(0) - the membrane proton channel. F(1) has five subunits: alpha(3), beta(3), gamma(1), delta(1), epsilon(1). F(0) has three main subunits: a(1), b(2) and c(10-14). The alpha and beta chains form an alternating ring which encloses part of the gamma chain. F(1) is attached to F(0) by a central stalk formed by the gamma and epsilon chains, while a peripheral stalk is formed by the delta and b chains.

It is found in the cell inner membrane. In terms of biological role, f(1)F(0) ATP synthase produces ATP from ADP in the presence of a proton or sodium gradient. F-type ATPases consist of two structural domains, F(1) containing the extramembraneous catalytic core and F(0) containing the membrane proton channel, linked together by a central stalk and a peripheral stalk. During catalysis, ATP synthesis in the catalytic domain of F(1) is coupled via a rotary mechanism of the central stalk subunits to proton translocation. Its function is as follows. This protein is part of the stalk that links CF(0) to CF(1). It either transmits conformational changes from CF(0) to CF(1) or is implicated in proton conduction. This is ATP synthase subunit delta from Dechloromonas aromatica (strain RCB).